The chain runs to 433 residues: MKFVDSADLIIKAGKGGDGAVSFLHALFVPNGGPNGGDGGDGGSVYFQGDEGKHSLLDLKLQKKYSAQDGFKGDIKNMHGANGEDKIIKVPVGTILYDKKTNTILADINENNKLVLIAKGGKGGKGNARFANSRNKAPTIFEAGELGQEFEIRAELKVLADVGFVGLPNAGKSTLLRAISNSKPVVADYPFTTINPQLGVARTKNNDTFIVADLPGLIQGASLGKGLGHQFLKHIERCLVICHIIDASGNFGSEDIIKNYELIRNELKAYNLNLEKRAEIIVLNKMDLDEAQLNLLDEKIINYFKNKKVVQISGLKKENIDQLLFMIYEELKIAKKQPLWELDKNNDQDEIAIYKFEEQKEDIQVYNKGNNRWEIAGETIFKIYQKFPIWTEDNLLMFNEKLKETGVYETLVKKGIKKGDFVKVFDYELEWTD.

The Obg domain maps to 1–159 (MKFVDSADLI…FEIRAELKVL (159 aa)). Residues 160-332 (ADVGFVGLPN…LLFMIYEELK (173 aa)) form the OBG-type G domain. GTP contacts are provided by residues 166-173 (GLPNAGKS), 191-195 (FTTIN), 213-216 (DLPG), 284-287 (NKMD), and 313-315 (SGL). S173 and T193 together coordinate Mg(2+). Residues 355-433 (KFEEQKEDIQ…VFDYELEWTD (79 aa)) form the OCT domain.

The protein belongs to the TRAFAC class OBG-HflX-like GTPase superfamily. OBG GTPase family. Monomer. It depends on Mg(2+) as a cofactor.

The protein resides in the cytoplasm. Functionally, an essential GTPase which binds GTP, GDP and possibly (p)ppGpp with moderate affinity, with high nucleotide exchange rates and a fairly low GTP hydrolysis rate. Plays a role in control of the cell cycle, stress response, ribosome biogenesis and in those bacteria that undergo differentiation, in morphogenesis control. The polypeptide is GTPase Obg (Mycoplasma capricolum subsp. capricolum (strain California kid / ATCC 27343 / NCTC 10154)).